The primary structure comprises 387 residues: 23S rRNA (uracil(747)-C(5))-methyltransferase RlmC (387 aa).

Residues Cys3, Cys11, Cys14, and Cys86 each contribute to the [4Fe-4S] cluster site. Residues Gln211, Phe240, Glu269, and Asn319 each contribute to the S-adenosyl-L-methionine site. Cys346 acts as the Nucleophile in catalysis.

It belongs to the class I-like SAM-binding methyltransferase superfamily. RNA M5U methyltransferase family. RlmC subfamily.

It carries out the reaction uridine(747) in 23S rRNA + S-adenosyl-L-methionine = 5-methyluridine(747) in 23S rRNA + S-adenosyl-L-homocysteine + H(+). Functionally, catalyzes the formation of 5-methyl-uridine at position 747 (m5U747) in 23S rRNA. This chain is 23S rRNA (uracil(747)-C(5))-methyltransferase RlmC, found in Pasteurella multocida (strain Pm70).